Here is a 283-residue protein sequence, read N- to C-terminus: Elongation factor Ts (283 aa).

The involved in Mg(2+) ion dislocation from EF-Tu stretch occupies residues 80–83 (TDFV).

It belongs to the EF-Ts family.

Its subcellular location is the cytoplasm. In terms of biological role, associates with the EF-Tu.GDP complex and induces the exchange of GDP to GTP. It remains bound to the aminoacyl-tRNA.EF-Tu.GTP complex up to the GTP hydrolysis stage on the ribosome. The chain is Elongation factor Ts from Actinobacillus pleuropneumoniae serotype 3 (strain JL03).